The primary structure comprises 801 residues: Phenylalanine--tRNA ligase beta subunit (801 aa).

Positions 39–153 (AAGLSKIVVG…EDAVPGEEVF (115 aa)) constitute a tRNA-binding domain. The B5 domain maps to 406–481 (TSDVEVSSTL…RIYGYDRLPT (76 aa)). The Mg(2+) site is built by Asp-459, Asp-465, Glu-468, and Glu-469. An FDX-ACB domain is found at 708–801 (TKFPAVSRDV…LEEKVNAEVR (94 aa)).

It belongs to the phenylalanyl-tRNA synthetase beta subunit family. Type 1 subfamily. Tetramer of two alpha and two beta subunits. Requires Mg(2+) as cofactor.

The protein localises to the cytoplasm. It carries out the reaction tRNA(Phe) + L-phenylalanine + ATP = L-phenylalanyl-tRNA(Phe) + AMP + diphosphate + H(+). The protein is Phenylalanine--tRNA ligase beta subunit of Streptococcus pneumoniae serotype 4 (strain ATCC BAA-334 / TIGR4).